The chain runs to 114 residues: Large ribosomal subunit protein bL19 (114 aa).

The protein belongs to the bacterial ribosomal protein bL19 family.

This protein is located at the 30S-50S ribosomal subunit interface and may play a role in the structure and function of the aminoacyl-tRNA binding site. The chain is Large ribosomal subunit protein bL19 from Desulfatibacillum aliphaticivorans.